A 209-amino-acid polypeptide reads, in one-letter code: Na(+)-translocating NADH-quinone reductase subunit D (209 aa).

Helical transmembrane passes span 42 to 62 (LVMT…ISLI), 66 to 86 (IPNS…VIVV), 103 to 123 (VFVG…AYAM), 131 to 151 (FMDG…VGFV), and 178 to 198 (NGLF…IWGL).

This sequence belongs to the NqrDE/RnfAE family. Composed of six subunits; NqrA, NqrB, NqrC, NqrD, NqrE and NqrF.

The protein resides in the cell inner membrane. The catalysed reaction is a ubiquinone + n Na(+)(in) + NADH + H(+) = a ubiquinol + n Na(+)(out) + NAD(+). In terms of biological role, NQR complex catalyzes the reduction of ubiquinone-1 to ubiquinol by two successive reactions, coupled with the transport of Na(+) ions from the cytoplasm to the periplasm. NqrA to NqrE are probably involved in the second step, the conversion of ubisemiquinone to ubiquinol. This chain is Na(+)-translocating NADH-quinone reductase subunit D, found in Yersinia pseudotuberculosis serotype O:1b (strain IP 31758).